The chain runs to 113 residues: Nucleoid-associated protein ROP_41370 (113 aa).

The protein belongs to the YbaB/EbfC family. Homodimer.

The protein resides in the cytoplasm. The protein localises to the nucleoid. In terms of biological role, binds to DNA and alters its conformation. May be involved in regulation of gene expression, nucleoid organization and DNA protection. In Rhodococcus opacus (strain B4), this protein is Nucleoid-associated protein ROP_41370.